The sequence spans 138 residues: Small ribosomal subunit protein uS8 (138 aa).

This sequence belongs to the universal ribosomal protein uS8 family. Part of the 30S ribosomal subunit. Contacts proteins S5 and S12.

In terms of biological role, one of the primary rRNA binding proteins, it binds directly to 16S rRNA central domain where it helps coordinate assembly of the platform of the 30S subunit. The protein is Small ribosomal subunit protein uS8 of Thermus aquaticus.